The following is a 251-amino-acid chain: Sugar fermentation stimulation protein homolog (251 aa).

The protein belongs to the SfsA family.

This Prochlorococcus marinus (strain MIT 9313) protein is Sugar fermentation stimulation protein homolog.